A 418-amino-acid polypeptide reads, in one-letter code: 3-isopropylmalate dehydratase large subunit (418 aa).

[4Fe-4S] cluster contacts are provided by C299, C359, and C362.

It belongs to the aconitase/IPM isomerase family. LeuC type 2 subfamily. In terms of assembly, heterodimer of LeuC and LeuD. It depends on [4Fe-4S] cluster as a cofactor.

It carries out the reaction (2R,3S)-3-isopropylmalate = (2S)-2-isopropylmalate. It functions in the pathway amino-acid biosynthesis; L-leucine biosynthesis; L-leucine from 3-methyl-2-oxobutanoate: step 2/4. Functionally, catalyzes the isomerization between 2-isopropylmalate and 3-isopropylmalate, via the formation of 2-isopropylmaleate. The chain is 3-isopropylmalate dehydratase large subunit from Oleidesulfovibrio alaskensis (strain ATCC BAA-1058 / DSM 17464 / G20) (Desulfovibrio alaskensis).